Consider the following 480-residue polypeptide: Gasdermin-C3 (480 aa).

The tract at residues 1–226 is triggers pyroptosis; sequence MGYSFDRASK…TCVILPSATK (226 aa).

It belongs to the gasdermin family. Homooligomer; homooligomeric ring-shaped pore complex containing 27-28 subunits when inserted in the membrane. Cleavage by CASP8 relieves autoinhibition by releasing the N-terminal moiety (Gasdermin-C3, N-terminal) that initiates pyroptosis. Post-translationally, palmitoylated.

It is found in the cytoplasm. The protein resides in the cytosol. It localises to the cell membrane. The full-length protein before cleavage is inactive: intramolecular interactions between N- and C-terminal domains mediate autoinhibition in the absence of activation signal. The intrinsic pyroptosis-inducing activity is carried by the released N-terminal moiety (Gasdermin-C3, N-terminal) following cleavage by caspase CASP8. This form constitutes the precursor of the pore-forming protein: upon cleavage, the released N-terminal moiety (Gasdermin-C3, N-terminal) binds to membranes and forms pores, triggering pyroptosis. Functionally, pore-forming protein that causes membrane permeabilization and pyroptosis. Produced by the cleavage of gasdermin-C3 by caspase CASP8 in response to death signals. After cleavage, moves to the plasma membrane where it strongly binds to membrane inner leaflet lipids. Homooligomerizes within the membrane and forms pores of 10-15 nanometers (nm) of inner diameter, triggering pyroptosis. This Mus musculus (Mouse) protein is Gasdermin-C3.